A 350-amino-acid chain; its full sequence is Inositol 2-dehydrogenase/D-chiro-inositol 3-dehydrogenase (350 aa).

It belongs to the Gfo/Idh/MocA family. In terms of assembly, homotetramer.

It carries out the reaction myo-inositol + NAD(+) = scyllo-inosose + NADH + H(+). It catalyses the reaction 1D-chiro-inositol + NAD(+) = scyllo-inosine + NADH + H(+). Its pathway is polyol metabolism; myo-inositol degradation into acetyl-CoA; acetyl-CoA from myo-inositol: step 1/7. Functionally, involved in the oxidation of myo-inositol (MI) and D-chiro-inositol (DCI) to 2-keto-myo-inositol (2KMI or 2-inosose) and 1-keto-D-chiro-inositol (1KDCI), respectively. The polypeptide is Inositol 2-dehydrogenase/D-chiro-inositol 3-dehydrogenase (Lactiplantibacillus plantarum (strain ATCC BAA-793 / NCIMB 8826 / WCFS1) (Lactobacillus plantarum)).